The following is a 557-amino-acid chain: D-arabinono-1,4-lactone oxidase (557 aa).

The FAD-binding PCMH-type domain maps to 26-209; sequence FFCKPQAIFQ…THVTLRTIPK (184 aa). Position 63 is a pros-8alpha-FAD histidine (His63).

Belongs to the oxygen-dependent FAD-linked oxidoreductase family. Requires FAD as cofactor.

It is found in the mitochondrion membrane. It catalyses the reaction D-arabinono-1,4-lactone + O2 = dehydro-D-arabinono-1,4-lactone + H2O2 + H(+). It functions in the pathway cofactor biosynthesis; D-erythroascorbate biosynthesis; dehydro-D-arabinono-1,4-lactone from D-arabinose: step 2/2. The polypeptide is D-arabinono-1,4-lactone oxidase (ALO1) (Debaryomyces hansenii (strain ATCC 36239 / CBS 767 / BCRC 21394 / JCM 1990 / NBRC 0083 / IGC 2968) (Yeast)).